A 242-amino-acid chain; its full sequence is Tryptophan synthase alpha chain (242 aa).

Active-site proton acceptor residues include Glu-31 and Asp-42.

It belongs to the TrpA family. In terms of assembly, tetramer of two alpha and two beta chains.

It carries out the reaction (1S,2R)-1-C-(indol-3-yl)glycerol 3-phosphate + L-serine = D-glyceraldehyde 3-phosphate + L-tryptophan + H2O. Its pathway is amino-acid biosynthesis; L-tryptophan biosynthesis; L-tryptophan from chorismate: step 5/5. The alpha subunit is responsible for the aldol cleavage of indoleglycerol phosphate to indole and glyceraldehyde 3-phosphate. The polypeptide is Tryptophan synthase alpha chain (Staphylococcus aureus (strain Mu3 / ATCC 700698)).